An 829-amino-acid chain; its full sequence is Protein roadkill (829 aa).

Composition is skewed to low complexity over residues 24 to 36 (EQQQ…QQQQ), 122 to 140 (TPAA…QAAP), and 266 to 288 (SSSS…SSSS). Disordered stretches follow at residues 24 to 47 (EQQQ…CCEN), 106 to 142 (SSLQ…APSV), 266 to 296 (SSSS…SHHS), and 313 to 400 (HLNQ…NQQQ). Positions 313–322 (HLNQQQHHHP) are enriched in basic residues. Low complexity-rich tracts occupy residues 323–353 (LSAS…QQQH), 372–382 (SSSSSSSSSSS), and 389–400 (SSSSSNSNNQQQ). Positions 486–616 (KFSYMWTINN…EDKLTIFCEV (131 aa)) constitute an MATH domain. The BTB domain maps to 655 to 722 (SDVTLSVGGR…IYTGKAPNLE (68 aa)).

Belongs to the Tdpoz family. In terms of assembly, interacts with ci and gft/CUL3. Expressed near the anterio-posterior compartment boundary of antenna, leg and wing disks.

The protein resides in the nucleus. It participates in protein modification; protein ubiquitination. Its function is as follows. Involved in segment polarity. In complex with gft/CUL3, promotes ubiquitination of ci and its subsequent degradation by the proteasome, which results in hh signaling attenuation. This regulation may be important during eye formation for proper packing of ommatidia into a hexagonal array. This chain is Protein roadkill (rdx), found in Drosophila melanogaster (Fruit fly).